The chain runs to 205 residues: Small ribosomal subunit protein uS5 (205 aa).

Positions 49 to 112 (LVDEVLCIDM…TNAKLNIVKV (64 aa)) constitute an S5 DRBM domain.

This sequence belongs to the universal ribosomal protein uS5 family. As to quaternary structure, part of the 30S ribosomal subunit. Contacts protein S4.

Functionally, with S4 and S12 plays an important role in translational accuracy. The protein is Small ribosomal subunit protein uS5 of Methanocorpusculum labreanum (strain ATCC 43576 / DSM 4855 / Z).